The following is a 567-amino-acid chain: 2-succinyl-5-enolpyruvyl-6-hydroxy-3-cyclohexene-1-carboxylate synthase (567 aa).

This sequence belongs to the TPP enzyme family. MenD subfamily. Homodimer. It depends on Mg(2+) as a cofactor. Mn(2+) serves as cofactor. Thiamine diphosphate is required as a cofactor.

The enzyme catalyses isochorismate + 2-oxoglutarate + H(+) = 5-enolpyruvoyl-6-hydroxy-2-succinyl-cyclohex-3-ene-1-carboxylate + CO2. Its pathway is quinol/quinone metabolism; 1,4-dihydroxy-2-naphthoate biosynthesis; 1,4-dihydroxy-2-naphthoate from chorismate: step 2/7. It participates in quinol/quinone metabolism; menaquinone biosynthesis. Catalyzes the thiamine diphosphate-dependent decarboxylation of 2-oxoglutarate and the subsequent addition of the resulting succinic semialdehyde-thiamine pyrophosphate anion to isochorismate to yield 2-succinyl-5-enolpyruvyl-6-hydroxy-3-cyclohexene-1-carboxylate (SEPHCHC). This Yersinia pseudotuberculosis serotype O:1b (strain IP 31758) protein is 2-succinyl-5-enolpyruvyl-6-hydroxy-3-cyclohexene-1-carboxylate synthase.